We begin with the raw amino-acid sequence, 445 residues long: Amino-acid acetyltransferase (445 aa).

The region spanning Glu-299–Ser-438 is the N-acetyltransferase domain.

It belongs to the acetyltransferase family. ArgA subfamily.

The protein localises to the cytoplasm. The enzyme catalyses L-glutamate + acetyl-CoA = N-acetyl-L-glutamate + CoA + H(+). Its pathway is amino-acid biosynthesis; L-arginine biosynthesis; N(2)-acetyl-L-ornithine from L-glutamate: step 1/4. In Vibrio atlanticus (strain LGP32) (Vibrio splendidus (strain Mel32)), this protein is Amino-acid acetyltransferase.